The primary structure comprises 77 residues: Conotoxin ArMKLT2-0322 (77 aa).

Positions 1–22 are cleaved as a signal peptide; that stretch reads MKLTCVLIIAVLFLIVCQLNTA. Positions 23–47 are excised as a propeptide; the sequence is DDSRDKQEYRAVRLRDAIRNSRGSR. 3 disulfides stabilise this stretch: Cys49–Cys62, Cys56–Cys67, and Cys61–Cys74.

Belongs to the conotoxin O1 superfamily. As to expression, expressed by the venom duct.

The protein localises to the secreted. This Conus arenatus (Sand-dusted cone) protein is Conotoxin ArMKLT2-0322.